Here is a 285-residue protein sequence, read N- to C-terminus: uncharacterized protein (285 aa).

This sequence belongs to the methyltransferase superfamily.

This is an uncharacterized protein from Mycobacterium tuberculosis (strain CDC 1551 / Oshkosh).